The chain runs to 479 residues: Nuclear envelope integral membrane protein 2 (479 aa).

The signal sequence occupies residues 1-23 (MEKLAAFILVLTLLCAYWQSAEG). Asn-69 carries N-linked (GlcNAc...) asparagine glycosylation. 5 helical membrane-spanning segments follow: residues 172–192 (LFFY…FLTL), 203–223 (LFLV…QRVL), 233–253 (HWME…AVCY), 276–296 (IVLL…VAVL), and 301–321 (ILPL…SFLA). N-linked (GlcNAc...) asparagine glycosylation is present at Asn-414. The tract at residues 414–479 (NSSSSDTQSH…PLDPEDQDFF (66 aa)) is disordered. A compositionally biased stretch (low complexity) spans 438–449 (NSPPVLNNLPSP). The segment covering 450–470 (TIYPPTICPYPPVTYTPQPEP) has biased composition (pro residues).

It belongs to the NEMP family.

The protein resides in the nucleus inner membrane. In terms of biological role, contributes to nuclear envelope stiffness in germ cells. Involved in male and female fertility. This chain is Nuclear envelope integral membrane protein 2, found in Danio rerio (Zebrafish).